Consider the following 445-residue polypeptide: Phosphoglucosamine mutase (445 aa).

The active-site Phosphoserine intermediate is the S102. 4 residues coordinate Mg(2+): S102, D241, D243, and D245. S102 is subject to Phosphoserine.

The protein belongs to the phosphohexose mutase family. The cofactor is Mg(2+). Post-translationally, activated by phosphorylation.

The enzyme catalyses alpha-D-glucosamine 1-phosphate = D-glucosamine 6-phosphate. Catalyzes the conversion of glucosamine-6-phosphate to glucosamine-1-phosphate. This Aliivibrio fischeri (strain ATCC 700601 / ES114) (Vibrio fischeri) protein is Phosphoglucosamine mutase.